The sequence spans 91 residues: Cytochrome c-554(547) (91 aa).

The heme c site is built by Cys-15, Cys-18, His-19, and Met-64.

Monomer. Binds 1 heme c group covalently per subunit.

This Halothiobacillus neapolitanus (Thiobacillus neapolitanus) protein is Cytochrome c-554(547).